The sequence spans 146 residues: 3-hydroxyacyl-[acyl-carrier-protein] dehydratase FabZ (146 aa).

H47 is a catalytic residue.

Belongs to the thioester dehydratase family. FabZ subfamily.

It is found in the cytoplasm. It catalyses the reaction a (3R)-hydroxyacyl-[ACP] = a (2E)-enoyl-[ACP] + H2O. In terms of biological role, involved in unsaturated fatty acids biosynthesis. Catalyzes the dehydration of short chain beta-hydroxyacyl-ACPs and long chain saturated and unsaturated beta-hydroxyacyl-ACPs. This is 3-hydroxyacyl-[acyl-carrier-protein] dehydratase FabZ from Methylococcus capsulatus (strain ATCC 33009 / NCIMB 11132 / Bath).